A 162-amino-acid chain; its full sequence is Nucleotide-binding protein Franean1_6074 (162 aa).

It belongs to the YajQ family.

Functionally, nucleotide-binding protein. This is Nucleotide-binding protein Franean1_6074 from Parafrankia sp. (strain EAN1pec).